The primary structure comprises 454 residues: CCA-adding enzyme (454 aa).

Positions 53 and 56 each coordinate ATP. Positions 53 and 56 each coordinate CTP. Positions 65, 67, and 119 each coordinate Mg(2+). ATP is bound by residues His-142, Lys-161, and Tyr-170. 3 residues coordinate CTP: His-142, Lys-161, and Tyr-170.

Belongs to the tRNA nucleotidyltransferase/poly(A) polymerase family. Archaeal CCA-adding enzyme subfamily. Homodimer. Mg(2+) is required as a cofactor.

It carries out the reaction a tRNA precursor + 2 CTP + ATP = a tRNA with a 3' CCA end + 3 diphosphate. The enzyme catalyses a tRNA with a 3' CCA end + 2 CTP + ATP = a tRNA with a 3' CCACCA end + 3 diphosphate. Its function is as follows. Catalyzes the addition and repair of the essential 3'-terminal CCA sequence in tRNAs without using a nucleic acid template. Adds these three nucleotides in the order of C, C, and A to the tRNA nucleotide-73, using CTP and ATP as substrates and producing inorganic pyrophosphate. tRNA 3'-terminal CCA addition is required both for tRNA processing and repair. Also involved in tRNA surveillance by mediating tandem CCA addition to generate a CCACCA at the 3' terminus of unstable tRNAs. While stable tRNAs receive only 3'-terminal CCA, unstable tRNAs are marked with CCACCA and rapidly degraded. This chain is CCA-adding enzyme, found in Thermococcus gammatolerans (strain DSM 15229 / JCM 11827 / EJ3).